Consider the following 105-residue polypeptide: VQVISSYDQFKQVTGGDKVVVIDFWATWCGPCKMIGPVFEKISDTPAGDKVGFYKVDVDEQSQIAQEVGIRAMPTFVFFKNGQKIDTVVGADPSKLQAAITQHSA.

The Thioredoxin domain maps to 1–105 (VQVISSYDQF…LQAAITQHSA (105 aa)). Catalysis depends on nucleophile residues C29 and C32. C29 and C32 form a disulfide bridge.

It belongs to the thioredoxin family. In terms of assembly, monomer.

In terms of biological role, participates in various redox reactions through the reversible oxidation of its active center dithiol to a disulfide and catalyzes dithiol-disulfide exchange reactions. This Malassezia sympodialis (Atopic eczema-associated yeast) protein is Thioredoxin.